The chain runs to 451 residues: Secreted RxLR effector protein 111 (451 aa).

The first 19 residues, 1-19 (MRGTLATALLLVASCRIAA), serve as a signal peptide directing secretion. Positions 48–69 (RFLRDNREQRVALALTAANESR) match the RxLR-dEER motif. The N-linked (GlcNAc...) asparagine glycan is linked to asparagine 66. Polar residues-rich tracts occupy residues 175–184 (RKTLSKTQFK) and 413–426 (SPAS…QRTG). Disordered regions lie at residues 175-194 (RKTL…STKR) and 404-451 (IPLQ…NKHA). The segment covering 437-451 (PERDSFRHIESNKHA) has biased composition (basic and acidic residues).

This sequence belongs to the RxLR effector family.

Its subcellular location is the secreted. The protein localises to the host nucleus. Functionally, secreted effector that acts as an elicitor that induces cell death in host plant cells. The protein is Secreted RxLR effector protein 111 of Plasmopara viticola (Downy mildew of grapevine).